The sequence spans 570 residues: Cation/calcium exchanger 1 (570 aa).

Transmembrane regions (helical) follow at residues 14–34, 97–117, 141–161, 176–196, 212–232, 235–255, 344–364, 371–391, 401–421, 427–447, 479–499, 513–533, and 546–566; these read LSLL…ASQT, SPVL…YLLG, MAGV…SSVV, ILGG…VLIG, VFLL…KVTI, ALCY…SHFF, CAVV…CSHY, LILY…AYLT, FSLV…YMIA, LLIS…LTVL, YAGP…ISSL, SLLE…VIMP, and GLLA…FGVL.

The protein belongs to the Ca(2+):cation antiporter (CaCA) (TC 2.A.19) family. Cation/calcium exchanger (CCX) subfamily. Expressed in roots, leaves, stems and flowers.

It is found in the vacuole membrane. Functionally, vacuolar membrane-localized H(+)-dependent K(+) and Na(+) transporter. This chain is Cation/calcium exchanger 1 (CCX1), found in Arabidopsis thaliana (Mouse-ear cress).